The primary structure comprises 382 residues: Pregnancy-associated glycoprotein 1 (382 aa).

An N-terminal signal peptide occupies residues 1-15 (MKWLVLLGLVAFSEC). A propeptide spans 16 to 53 (IVKIPLRRVKTMRNTLSGKKMLNSFLKEHAYRLSQISF) (activation peptide). N-linked (GlcNAc...) asparagine glycosylation is found at asparagine 57 and asparagine 74. The region spanning 71–379 (YVGNITIGTP…DRGNDRIGLA (309 aa)) is the Peptidase A1 domain. Cysteine 102 and cysteine 110 are disulfide-bonded. The N-linked (GlcNAc...) asparagine glycan is linked to asparagine 128. Cystine bridges form between cysteine 263-cysteine 267 and cysteine 305-cysteine 339.

Belongs to the peptidase A1 family. In terms of tissue distribution, trophoblast and placental tissue. Produced specifically in the invasive binucleate cells of the placenta.

Its subcellular location is the secreted. It localises to the extracellular space. In terms of biological role, has no proteolytic activity. The protein is Pregnancy-associated glycoprotein 1 of Ovis aries (Sheep).